Here is a 477-residue protein sequence, read N- to C-terminus: Bifunctional protein HldE (477 aa).

The ribokinase stretch occupies residues 1-318 (MKVTLPEFER…ENAVRGRAET (318 aa)). 195 to 198 (NLSE) serves as a coordination point for ATP. Aspartate 264 is an active-site residue. Positions 344 to 477 (MTNGVFDILH…IKKIQKDSDK (134 aa)) are cytidylyltransferase.

It in the N-terminal section; belongs to the carbohydrate kinase PfkB family. This sequence in the C-terminal section; belongs to the cytidylyltransferase family. As to quaternary structure, homodimer.

It catalyses the reaction D-glycero-beta-D-manno-heptose 7-phosphate + ATP = D-glycero-beta-D-manno-heptose 1,7-bisphosphate + ADP + H(+). The enzyme catalyses D-glycero-beta-D-manno-heptose 1-phosphate + ATP + H(+) = ADP-D-glycero-beta-D-manno-heptose + diphosphate. Its pathway is nucleotide-sugar biosynthesis; ADP-L-glycero-beta-D-manno-heptose biosynthesis; ADP-L-glycero-beta-D-manno-heptose from D-glycero-beta-D-manno-heptose 7-phosphate: step 1/4. It participates in nucleotide-sugar biosynthesis; ADP-L-glycero-beta-D-manno-heptose biosynthesis; ADP-L-glycero-beta-D-manno-heptose from D-glycero-beta-D-manno-heptose 7-phosphate: step 3/4. In terms of biological role, catalyzes the phosphorylation of D-glycero-D-manno-heptose 7-phosphate at the C-1 position to selectively form D-glycero-beta-D-manno-heptose-1,7-bisphosphate. Catalyzes the ADP transfer from ATP to D-glycero-beta-D-manno-heptose 1-phosphate, yielding ADP-D-glycero-beta-D-manno-heptose. This chain is Bifunctional protein HldE, found in Klebsiella pneumoniae subsp. pneumoniae (strain ATCC 700721 / MGH 78578).